The primary structure comprises 156 residues: Cytochrome c-type biogenesis protein CcmE (156 aa).

Topologically, residues 1 to 16 (MNATKAPGGIKPKHQR) are cytoplasmic. Residues 17–37 (LVLLVIALVALIGAGLLAAYA) form a helical; Signal-anchor for type II membrane protein membrane-spanning segment. Residues 38–156 (LSNQASYFYV…QAEAVVAETK (119 aa)) are Periplasmic-facing. Residues His131 and Tyr135 each contribute to the heme site.

It belongs to the CcmE/CycJ family.

Its subcellular location is the cell inner membrane. Functionally, heme chaperone required for the biogenesis of c-type cytochromes. Transiently binds heme delivered by CcmC and transfers the heme to apo-cytochromes in a process facilitated by CcmF and CcmH. In Novosphingobium aromaticivorans (strain ATCC 700278 / DSM 12444 / CCUG 56034 / CIP 105152 / NBRC 16084 / F199), this protein is Cytochrome c-type biogenesis protein CcmE.